Reading from the N-terminus, the 402-residue chain is Nuclear hormone receptor family member nhr-96 (402 aa).

Residues 4–79 (FGLCAVCGQV…VGMDVKKIQQ (76 aa)) constitute a DNA-binding region (nuclear receptor). 2 consecutive NR C4-type zinc fingers follow at residues 7–27 (CAVC…CRSC) and 44–67 (CVKA…LKRC). The region spanning 154-402 (NYYNSLELLT…FSDPEMFELT (249 aa)) is the NR LBD domain.

It belongs to the nuclear hormone receptor family.

The protein localises to the nucleus. In terms of biological role, orphan nuclear receptor. This chain is Nuclear hormone receptor family member nhr-96 (nhr-96), found in Caenorhabditis elegans.